A 472-amino-acid polypeptide reads, in one-letter code: MAFCSPAMMNYNIASNFGDSESASVRQTSSPSLLWSAPGHLSPLTLHCQLSLLYAEQPKSPWCEARPLEPVLPVSRETLKRKTNGSDCTSPIASNPGSKRDAHFCAVCSDYASGYHYGVWSCEGCKAFFKRSIQGHNDYICPATNQCTIDKNRRKSCQACRLRKCYEVGMMKCGSRRERCGYRILRRHRNSEDCMGKTKKYNEAATRVKEILLSTVSPEQFVLTLLEAEPPNVLVSRPSKPFTEASMMMSLTKLADKELVHMIGWAKKIPGFIDLSLYDQVRLLESCWLEVLMIGLMWRSIDHPGKLIFAPDLVLDRDEGKCVEGILEIFDMLLAMTSRFRELKLQHKEYLCVKAMILLNSSMFPLSAEEPESNRKLHHLLNVVTDALVWVIAKSGIPSQQQTTRLANLLMLLSHVRHASNKGMEHLLSMKCKNVVPVYDLLLEMLNAHTLRGQRKSPVTHPDFEQVSHFQV.

Residues methionine 1–phenylalanine 104 form a modulating region. 2 consecutive NR C4-type zinc fingers follow at residues cysteine 105–cysteine 125 and cysteine 141–cysteine 165. A DNA-binding region (nuclear receptor) is located at residues cysteine 105–methionine 170. Residues serine 217–histidine 449 enclose the NR LBD domain.

This sequence belongs to the nuclear hormone receptor family. NR3 subfamily. As to quaternary structure, binds DNA as a homodimer. Can form a heterodimer with ER-alpha. In terms of tissue distribution, a high expression is seen in the telencephalon, diencephalon, pituitary, testis and kidneys but little or no expression is seen in the cerebellum, pectoral muscle and adrenal gland.

The protein localises to the nucleus. In terms of biological role, binds estrogens with an affinity similar to that of ER-alpha, and activates expression of reporter genes containing estrogen response elements (ERE) in an estrogen-dependent manner. The protein is Estrogen receptor beta (ESR2) of Coturnix japonica (Japanese quail).